The chain runs to 215 residues: Large ribosomal subunit protein uL1 (215 aa).

The protein belongs to the universal ribosomal protein uL1 family. Part of the 50S ribosomal subunit.

Binds directly to 23S rRNA. Probably involved in E site tRNA release. In terms of biological role, protein L1 is also a translational repressor protein, it controls the translation of its operon by binding to its mRNA. This chain is Large ribosomal subunit protein uL1, found in Methanospirillum hungatei JF-1 (strain ATCC 27890 / DSM 864 / NBRC 100397 / JF-1).